Reading from the N-terminus, the 300-residue chain is Haloalkane dehalogenase (300 aa).

The AB hydrolase-1 domain maps to 32 to 155 (AIVFQHGNPT…PAVRGVFQGF (124 aa)). Aspartate 109 serves as the catalytic Nucleophile. The active-site Proton donor is glutamate 133. The active-site Proton acceptor is histidine 273.

Belongs to the haloalkane dehalogenase family. Type 2 subfamily. Monomer.

It carries out the reaction 1-haloalkane + H2O = a halide anion + a primary alcohol + H(+). Catalyzes hydrolytic cleavage of carbon-halogen bonds in halogenated aliphatic compounds, leading to the formation of the corresponding primary alcohols, halide ions and protons. In Mycobacterium bovis (strain ATCC BAA-935 / AF2122/97), this protein is Haloalkane dehalogenase.